A 432-amino-acid polypeptide reads, in one-letter code: Adenylosuccinate synthetase (432 aa).

GTP is bound by residues 12 to 18 (GDEGKGK) and 40 to 42 (GHT). D13 functions as the Proton acceptor in the catalytic mechanism. Mg(2+)-binding residues include D13 and G40. Residues 13–16 (DEGK), 38–41 (NAGH), T132, R146, Q226, T241, and R305 contribute to the IMP site. The active-site Proton donor is H41. 301–307 (TVTGRKR) is a binding site for substrate. GTP contacts are provided by residues R307, 333–335 (KLD), and 415–417 (STS).

This sequence belongs to the adenylosuccinate synthetase family. In terms of assembly, homodimer. Mg(2+) serves as cofactor.

It is found in the cytoplasm. It carries out the reaction IMP + L-aspartate + GTP = N(6)-(1,2-dicarboxyethyl)-AMP + GDP + phosphate + 2 H(+). It participates in purine metabolism; AMP biosynthesis via de novo pathway; AMP from IMP: step 1/2. In terms of biological role, plays an important role in the de novo pathway of purine nucleotide biosynthesis. Catalyzes the first committed step in the biosynthesis of AMP from IMP. This is Adenylosuccinate synthetase from Rhizobium etli (strain ATCC 51251 / DSM 11541 / JCM 21823 / NBRC 15573 / CFN 42).